Consider the following 282-residue polypeptide: tRNA uridine(34) hydroxylase (282 aa).

One can recognise a Rhodanese domain in the interval Asp128–Tyr222. Residue Cys182 is the Cysteine persulfide intermediate of the active site.

The protein belongs to the TrhO family.

It carries out the reaction uridine(34) in tRNA + AH2 + O2 = 5-hydroxyuridine(34) in tRNA + A + H2O. Functionally, catalyzes oxygen-dependent 5-hydroxyuridine (ho5U) modification at position 34 in tRNAs. This Cupriavidus metallidurans (strain ATCC 43123 / DSM 2839 / NBRC 102507 / CH34) (Ralstonia metallidurans) protein is tRNA uridine(34) hydroxylase.